A 337-amino-acid chain; its full sequence is uncharacterized protein (337 aa).

The F-box domain maps to 22–76 (PFRLLSLPTLALKNVLLHIDFIDLLELSLASKKCEIYMKTCCLKIDSLHFHFRRI).

This is an uncharacterized protein from Caenorhabditis elegans.